Consider the following 339-residue polypeptide: GTPase Obg (339 aa).

The 159-residue stretch at 1-159 (MKFVDEAFVR…RELKLELKLL (159 aa)) folds into the Obg domain. The interval 127–147 (NTHFKSSTNRAPRRTTSGEEG) is disordered. The OBG-type G domain occupies 160–333 (ADVGLLGLPN…LCYDLMSFLE (174 aa)). Residues 166-173 (GLPNAGKS), 191-195 (FTTLY), 213-216 (DIPG), 283-286 (NKID), and 314-316 (SAI) contribute to the GTP site. Ser173 and Thr193 together coordinate Mg(2+).

This sequence belongs to the TRAFAC class OBG-HflX-like GTPase superfamily. OBG GTPase family. As to quaternary structure, monomer. Mg(2+) serves as cofactor.

The protein localises to the cytoplasm. An essential GTPase which binds GTP, GDP and possibly (p)ppGpp with moderate affinity, with high nucleotide exchange rates and a fairly low GTP hydrolysis rate. Plays a role in control of the cell cycle, stress response, ribosome biogenesis and in those bacteria that undergo differentiation, in morphogenesis control. This is GTPase Obg from Coxiella burnetii (strain CbuG_Q212) (Coxiella burnetii (strain Q212)).